The primary structure comprises 346 residues: MICYSFAKNVTFAFLIILQNFFSQHDEEYKYNYTCITPTVRKAQRLESVINGIMLTLILPVSTVVICTLLIYYKWTKQTITSPYLITLFISDSLHSLTVLLLTLNREALTNLNQALCQCVLFVYSASCTYSLCMLAVISTIRYRTLQRRTLNDKNNNHIKRNVGILFLSSAMCAIPAVLYVQVEKKKGNYGKCNIHISTQKAYDLFIGIKIVYCFLWGIFPTVIFSYFYVIFGKTLRALTQSKHNKTLSFISLLILSFLCIQIPNLLVMSVEIFFLYIANTSCLGTIQREIVQIISRLMPEIHCLSNPLVYAFTRTDFRLRFYDFIKCNLCNSSLKRKRNPLTIKN.

Residues 1–31 (MICYSFAKNVTFAFLIILQNFFSQHDEEYKY) are Extracellular-facing. Residues 32-56 (NYTCITPTVRKAQRLESVINGIMLT) traverse the membrane as a helical segment. At 57–83 (LILPVSTVVICTLLIYYKWTKQTITSP) the chain is on the cytoplasmic side. A helical membrane pass occupies residues 84-108 (YLITLFISDSLHSLTVLLLTLNREA). Residues 109 to 115 (LTNLNQA) are Extracellular-facing. Residues 116-142 (LCQCVLFVYSASCTYSLCMLAVISTIR) traverse the membrane as a helical segment. Topologically, residues 143–159 (YRTLQRRTLNDKNNNHI) are cytoplasmic. A helical transmembrane segment spans residues 160–181 (KRNVGILFLSSAMCAIPAVLYV). The Extracellular segment spans residues 182–208 (QVEKKKGNYGKCNIHISTQKAYDLFIG). The helical transmembrane segment at 209–229 (IKIVYCFLWGIFPTVIFSYFY) threads the bilayer. Over 230–245 (VIFGKTLRALTQSKHN) the chain is Cytoplasmic. A helical membrane pass occupies residues 246-272 (KTLSFISLLILSFLCIQIPNLLVMSVE). Topologically, residues 273 to 286 (IFFLYIANTSCLGT) are extracellular. A helical transmembrane segment spans residues 287 to 310 (IQREIVQIISRLMPEIHCLSNPLV). Residues 311-346 (YAFTRTDFRLRFYDFIKCNLCNSSLKRKRNPLTIKN) lie on the Cytoplasmic side of the membrane.

This sequence belongs to the G-protein coupled receptor 1 family.

The protein resides in the host cell membrane. The chain is G-protein coupled receptor homolog U12 (U12) from Homo sapiens (Human).